A 222-amino-acid chain; its full sequence is Octanoyltransferase (222 aa).

In terms of domain architecture, BPL/LPL catalytic spans 34 to 214 (AEAPSTVLLL…EFRKHEEALV (181 aa)). Substrate-binding positions include 72–79 (RGGKLTWH), 144–146 (AIG), and 157–159 (GIA). The active-site Acyl-thioester intermediate is C175.

This sequence belongs to the LipB family.

It localises to the cytoplasm. The catalysed reaction is octanoyl-[ACP] + L-lysyl-[protein] = N(6)-octanoyl-L-lysyl-[protein] + holo-[ACP] + H(+). Its pathway is protein modification; protein lipoylation via endogenous pathway; protein N(6)-(lipoyl)lysine from octanoyl-[acyl-carrier-protein]: step 1/2. In terms of biological role, catalyzes the transfer of endogenously produced octanoic acid from octanoyl-acyl-carrier-protein onto the lipoyl domains of lipoate-dependent enzymes. Lipoyl-ACP can also act as a substrate although octanoyl-ACP is likely to be the physiological substrate. This Arthrobacter sp. (strain FB24) protein is Octanoyltransferase.